Consider the following 90-residue polypeptide: FMRFamide-like neuropeptides 27 (90 aa).

The first 24 residues, Met1–Ala24, serve as a signal peptide directing secretion. The propeptide occupies Gln25 to Glu36. Position 61 is a phenylalanine amide (Phe61). Residues Ser65 to Leu90 constitute a propeptide that is removed on maturation.

It belongs to the FARP (FMRFamide related peptide) family.

It is found in the secreted. Its function is as follows. FMRFamides and FMRFamide-like peptides are neuropeptides. The chain is FMRFamide-like neuropeptides 27 from Caenorhabditis briggsae.